A 72-amino-acid chain; its full sequence is Translation initiation factor IF-1 (72 aa).

In terms of domain architecture, S1-like spans 1 to 72 (MSKQDVIELE…SRGRITWRKK (72 aa)).

Belongs to the IF-1 family. As to quaternary structure, component of the 30S ribosomal translation pre-initiation complex which assembles on the 30S ribosome in the order IF-2 and IF-3, IF-1 and N-formylmethionyl-tRNA(fMet); mRNA recruitment can occur at any time during PIC assembly.

Its subcellular location is the cytoplasm. Its function is as follows. One of the essential components for the initiation of protein synthesis. Stabilizes the binding of IF-2 and IF-3 on the 30S subunit to which N-formylmethionyl-tRNA(fMet) subsequently binds. Helps modulate mRNA selection, yielding the 30S pre-initiation complex (PIC). Upon addition of the 50S ribosomal subunit IF-1, IF-2 and IF-3 are released leaving the mature 70S translation initiation complex. The polypeptide is Translation initiation factor IF-1 (Alkaliphilus oremlandii (strain OhILAs) (Clostridium oremlandii (strain OhILAs))).